The following is a 257-amino-acid chain: Zinc transporter ZupT (257 aa).

Helical transmembrane passes span 5–25 (LILTILAGAATFIGAFLGVLG), 32–52 (LLAFSLGFAAGIMLLISLMEM), and 61–81 (GMSPVLGYGMFIFGLLGYFGL). Positions 120 and 123 each coordinate Fe(2+). Zn(2+)-binding residues include E123 and H148. The next 4 membrane-spanning stretches (helical) occupy residues 137-157 (LGFGIALAVALHNIPEGLAVA), 171-191 (ILWAGISGLAEILGGVLAWLI), 195-215 (MISPVVMAAIMAVVAGIMVAL), and 236-256 (GVLCGMSVMGFSLVLLQTAGI). Residues N149, E152, and E181 each coordinate Fe(2+). Position 152 (E152) interacts with Zn(2+).

Belongs to the ZIP transporter (TC 2.A.5) family. ZupT subfamily.

It is found in the cell inner membrane. The catalysed reaction is Zn(2+)(in) = Zn(2+)(out). Mediates zinc uptake. May also transport other divalent cations. The protein is Zinc transporter ZupT of Escherichia coli O7:K1 (strain IAI39 / ExPEC).